Consider the following 258-residue polypeptide: Histidine/lysine/arginine/ornithine transport ATP-binding protein HisP (258 aa).

In terms of domain architecture, ABC transporter spans 7-253; sequence LHVIDLHKRY…PQSPRLQQFL (247 aa). Residues Ser-41, Gly-42, Gly-44, Lys-45, Ser-46, and Thr-47 each coordinate ATP.

It belongs to the ABC transporter superfamily. As to quaternary structure, the HisPMQJ complex is composed of two ATP-binding proteins (HisP), two transmembrane proteins (HisM and HisQ) and a solute-binding protein (HisJ). The HisPMQ-ArgT complex is composed of two ATP-binding proteins (HisP), two transmembrane proteins (HisM and HisQ) and a solute-binding protein (ArgT).

It localises to the cell inner membrane. It carries out the reaction a polar amino acid(out) + ATP + H2O = a polar amino acid(in) + ADP + phosphate + H(+). It catalyses the reaction L-histidine(out) + ATP + H2O = L-histidine(in) + ADP + phosphate + H(+). The catalysed reaction is L-lysine(out) + ATP + H2O = L-lysine(in) + ADP + phosphate + H(+). The enzyme catalyses L-arginine(out) + ATP + H2O = L-arginine(in) + ADP + phosphate + H(+). It carries out the reaction L-ornithine(out) + ATP + H2O = L-ornithine(in) + ADP + phosphate + H(+). With respect to regulation, isolated, soluble HisP has a very low ATPase activity. ATPase activity is slightly increased in the presence of HisM and HisQ, and strongly increased when HisJ is also present. Functionally, part of the ABC transporter complex HisPMQJ involved in histidine transport. Is also part of the ABC transporter complex HisPMQ-ArgT involved in lysine/arginine/ornithine transport. Shows ATPase activity. Responsible for energy coupling to the transport system. In Salmonella typhimurium (strain LT2 / SGSC1412 / ATCC 700720), this protein is Histidine/lysine/arginine/ornithine transport ATP-binding protein HisP.